The following is a 172-amino-acid chain: Small ribosomal subunit protein uS5 (172 aa).

The S5 DRBM domain occupies 16–79 (LKDRLVAINR…EAAKKNLIRV (64 aa)).

The protein belongs to the universal ribosomal protein uS5 family. In terms of assembly, part of the 30S ribosomal subunit. Contacts proteins S4 and S8.

In terms of biological role, with S4 and S12 plays an important role in translational accuracy. Located at the back of the 30S subunit body where it stabilizes the conformation of the head with respect to the body. In Porphyromonas gingivalis (strain ATCC BAA-308 / W83), this protein is Small ribosomal subunit protein uS5.